A 91-amino-acid polypeptide reads, in one-letter code: Small ribosomal subunit protein bS20 (91 aa).

The span at 1 to 21 shows a compositional bias: basic and acidic residues; that stretch reads MPLHKSAEKRLRQSARRNERN. Disordered regions lie at residues 1-25 and 70-91; these read MPLHKSAEKRLRQSARRNERNRARK and PNKASRKKSQLSRMLNNYMKAE. Positions 70 to 79 are enriched in basic residues; sequence PNKASRKKSQ.

Belongs to the bacterial ribosomal protein bS20 family.

Binds directly to 16S ribosomal RNA. The protein is Small ribosomal subunit protein bS20 of Chlorobium phaeobacteroides (strain BS1).